The chain runs to 122 residues: Large ribosomal subunit protein eL18 (122 aa).

Belongs to the eukaryotic ribosomal protein eL18 family.

This chain is Large ribosomal subunit protein eL18, found in Thermoplasma volcanium (strain ATCC 51530 / DSM 4299 / JCM 9571 / NBRC 15438 / GSS1).